Here is a 338-residue protein sequence, read N- to C-terminus: Queuosine 5'-phosphate N-glycosylase/hydrolase (338 aa).

Residue M1 is modified to N-acetylmethionine. Queuine contacts are provided by H51, F235, D237, D311, Y312, and D316. Catalysis depends on D237, which acts as the Nucleophile or transition state stabilizer.

This sequence belongs to the QNG1 protein family. Highly expressed in liver.

The enzyme catalyses queuosine 5'-phosphate + H2O = queuine + D-ribose 5-phosphate. In terms of biological role, catalyzes the hydrolysis of queuosine 5'-phosphate, releasing the nucleobase queuine (q). Is required for salvage of queuine from exogenous queuosine (Q) that is imported and then converted to queuosine 5'-phosphate intracellularly. In Mus musculus (Mouse), this protein is Queuosine 5'-phosphate N-glycosylase/hydrolase.